A 427-amino-acid chain; its full sequence is L-glutamine:2-deoxy-scyllo-inosose aminotransferase (427 aa).

The tract at residues 1–20 (MPLQSSRLAVDNGTPVRGKP) is disordered. Lys205 bears the N6-(pyridoxal phosphate)lysine mark.

The protein belongs to the DegT/DnrJ/EryC1 family. L-glutamine:2-deoxy-scyllo-inosose/scyllo-inosose aminotransferase subfamily. It depends on pyridoxal 5'-phosphate as a cofactor.

The enzyme catalyses 2-deoxy-L-scyllo-inosose + L-glutamine = 2-deoxy-scyllo-inosamine + 2-oxoglutaramate. It catalyses the reaction 3-amino-2,3-dideoxy-scyllo-inosose + L-glutamine = 2-deoxystreptamine + 2-oxoglutaramate. It participates in metabolic intermediate biosynthesis; 2-deoxystreptamine biosynthesis; 2-deoxystreptamine from D-glucose 6-phosphate: step 2/4. Its pathway is antibiotic biosynthesis; kanamycin biosynthesis. Its function is as follows. Catalyzes the PLP-dependent transamination of 2-deoxy-scyllo-inosose (2-DOI) to form 2-deoxy-scyllo-inosamine (2-DOIA) using L-glutamine as the amino donor. Also catalyzes the transamination of 3-amino-2,3-dideoxy-scyllo-inosose (keto-2-DOIA) into 2-deoxystreptamine (2-DOS). The protein is L-glutamine:2-deoxy-scyllo-inosose aminotransferase (kanB) of Streptomyces kanamyceticus.